We begin with the raw amino-acid sequence, 157 residues long: uncharacterized protein (157 aa).

4 helical membrane-spanning segments follow: residues 29–49, 52–72, 93–113, and 117–137; these read LLIIPLLLLWGVSASFQPAYF, VLHVAISGILLLIGLACGFGI, LGSVILILVILSLRMAARTWL, and NEMFIAIIHSMFFVPLGTITA.

Its subcellular location is the cell membrane. This is an uncharacterized protein from Bacillus subtilis (strain 168).